We begin with the raw amino-acid sequence, 390 residues long: Succinyl-diaminopimelate desuccinylase (390 aa).

His-74 serves as a coordination point for Zn(2+). Asp-76 is a catalytic residue. Asp-107 provides a ligand contact to Zn(2+). The Proton acceptor role is filled by Glu-140. Residues Glu-141, Glu-169, and His-363 each coordinate Zn(2+).

The protein belongs to the peptidase M20A family. DapE subfamily. Homodimer. It depends on Zn(2+) as a cofactor. Co(2+) is required as a cofactor.

The enzyme catalyses N-succinyl-(2S,6S)-2,6-diaminopimelate + H2O = (2S,6S)-2,6-diaminopimelate + succinate. Its pathway is amino-acid biosynthesis; L-lysine biosynthesis via DAP pathway; LL-2,6-diaminopimelate from (S)-tetrahydrodipicolinate (succinylase route): step 3/3. In terms of biological role, catalyzes the hydrolysis of N-succinyl-L,L-diaminopimelic acid (SDAP), forming succinate and LL-2,6-diaminopimelate (DAP), an intermediate involved in the bacterial biosynthesis of lysine and meso-diaminopimelic acid, an essential component of bacterial cell walls. The chain is Succinyl-diaminopimelate desuccinylase from Bartonella bacilliformis (strain ATCC 35685 / KC583 / Herrer 020/F12,63).